Consider the following 418-residue polypeptide: Glutamyl-tRNA reductase (418 aa).

Substrate is bound by residues 49 to 52 (TCNR), Ser-108, 113 to 115 (EPQ), and Gln-119. Residue Cys-50 is the Nucleophile of the active site. 188–193 (GAGETI) contacts NADP(+).

This sequence belongs to the glutamyl-tRNA reductase family. In terms of assembly, homodimer.

It catalyses the reaction (S)-4-amino-5-oxopentanoate + tRNA(Glu) + NADP(+) = L-glutamyl-tRNA(Glu) + NADPH + H(+). Its pathway is porphyrin-containing compound metabolism; protoporphyrin-IX biosynthesis; 5-aminolevulinate from L-glutamyl-tRNA(Glu): step 1/2. In terms of biological role, catalyzes the NADPH-dependent reduction of glutamyl-tRNA(Glu) to glutamate 1-semialdehyde (GSA). This is Glutamyl-tRNA reductase from Aliivibrio fischeri (strain ATCC 700601 / ES114) (Vibrio fischeri).